The chain runs to 369 residues: Maltose/maltodextrin import ATP-binding protein MalK (369 aa).

The region spanning 4–234 is the ABC transporter domain; the sequence is VTLRNVCKAY…PQNRFVAGFI (231 aa). ATP is bound at residue 36-43; sequence GPSGCGKS.

The protein belongs to the ABC transporter superfamily. Maltooligosaccharide importer (TC 3.A.1.1.1) family. As to quaternary structure, the complex is composed of two ATP-binding proteins (MalK), two transmembrane proteins (MalG and MalK) and a solute-binding protein (MalE).

The protein resides in the cell inner membrane. It carries out the reaction D-maltose(out) + ATP + H2O = D-maltose(in) + ADP + phosphate + H(+). Functionally, part of the ABC transporter complex MalEFGK involved in maltose/maltodextrin import. Responsible for energy coupling to the transport system. The protein is Maltose/maltodextrin import ATP-binding protein MalK of Photobacterium profundum (strain SS9).